A 197-amino-acid polypeptide reads, in one-letter code: Holliday junction branch migration complex subunit RuvA (197 aa).

Positions 1–64 (MIASVRGVVQ…EDMLALFGFS (64 aa)) are domain I. The segment at 65–143 (SPAQRALFEL…VATISPQLST (79 aa)) is domain II. Positions 144–153 (NPGLLALNTE) are flexible linker. Residues 153–197 (ELIDILTSLGYSTTEAQAALNALPADAPADTEERLRLALQYFGGV) form a domain III region.

Belongs to the RuvA family. Homotetramer. Forms an RuvA(8)-RuvB(12)-Holliday junction (HJ) complex. HJ DNA is sandwiched between 2 RuvA tetramers; dsDNA enters through RuvA and exits via RuvB. An RuvB hexamer assembles on each DNA strand where it exits the tetramer. Each RuvB hexamer is contacted by two RuvA subunits (via domain III) on 2 adjacent RuvB subunits; this complex drives branch migration. In the full resolvosome a probable DNA-RuvA(4)-RuvB(12)-RuvC(2) complex forms which resolves the HJ.

The protein resides in the cytoplasm. Functionally, the RuvA-RuvB-RuvC complex processes Holliday junction (HJ) DNA during genetic recombination and DNA repair, while the RuvA-RuvB complex plays an important role in the rescue of blocked DNA replication forks via replication fork reversal (RFR). RuvA specifically binds to HJ cruciform DNA, conferring on it an open structure. The RuvB hexamer acts as an ATP-dependent pump, pulling dsDNA into and through the RuvAB complex. HJ branch migration allows RuvC to scan DNA until it finds its consensus sequence, where it cleaves and resolves the cruciform DNA. The sequence is that of Holliday junction branch migration complex subunit RuvA from Herpetosiphon aurantiacus (strain ATCC 23779 / DSM 785 / 114-95).